A 421-amino-acid polypeptide reads, in one-letter code: Trimethyllysine dioxygenase, mitochondrial (421 aa).

The transit peptide at 1–15 (MWYHKLLHQQSRLQN) directs the protein to the mitochondrion. Residues lysine 179 and lysine 236 each carry the N6-acetyllysine modification. Fe cation-binding residues include histidine 242, aspartate 244, and histidine 389.

Belongs to the gamma-BBH/TMLD family. As to quaternary structure, homodimer. Fe(2+) is required as a cofactor. It depends on L-ascorbate as a cofactor.

The protein localises to the mitochondrion matrix. The catalysed reaction is N(6),N(6),N(6)-trimethyl-L-lysine + 2-oxoglutarate + O2 = (3S)-3-hydroxy-N(6),N(6),N(6)-trimethyl-L-lysine + succinate + CO2. It functions in the pathway amine and polyamine biosynthesis; carnitine biosynthesis. Its function is as follows. Converts trimethyllysine (TML) into hydroxytrimethyllysine (HTML). The sequence is that of Trimethyllysine dioxygenase, mitochondrial (Tmlhe) from Rattus norvegicus (Rat).